The sequence spans 227 residues: Ferritin light chain (227 aa).

Residues 1–19 form the signal peptide; that stretch reads MKFFVALALFACLGSLALA. Cys25 and Cys44 form a disulfide bridge. In terms of domain architecture, Ferritin-like diiron spans 48–208; that stretch reads FAGIDHIEPE…GYANDLAKLM (161 aa).

The protein belongs to the ferritin family. Oligomer of 12 light (L) chains and 12 heavy (H) chains; L and H chains are disulfide-linked. The functional molecule forms a roughly spherical shell with a diameter of 12 nm and contains a central cavity into which the insoluble ferric iron core is deposited. In terms of tissue distribution, expressed in hemolymph, gut, ovaries and to a lesser extent in testes (at protein level). Expressed in the head (at protein level).

It localises to the golgi apparatus. The protein localises to the secreted. In terms of biological role, stores iron in a soluble, non-toxic, readily available form. Important for iron homeostasis. Iron is taken up in the ferrous form and deposited as ferric hydroxides after oxidation. Ferritin is composed of a heavy (H) chain which is responsible for the oxidation and uptake of ferrous iron, and a light (L) chain which facilitates the nucleation of the ferrihydrite iron core. Required for dietary iron absorption in the midgut. Involved in tissue iron detoxification by exporting excess iron. Plays a role in the maintenance of circadian rhythms. Required for embryo and larval development. This is Ferritin light chain from Drosophila melanogaster (Fruit fly).